Consider the following 255-residue polypeptide: Imidazole glycerol phosphate synthase subunit HisF (255 aa).

Active-site residues include D11 and D130.

The protein belongs to the HisA/HisF family. As to quaternary structure, heterodimer of HisH and HisF.

The protein localises to the cytoplasm. The enzyme catalyses 5-[(5-phospho-1-deoxy-D-ribulos-1-ylimino)methylamino]-1-(5-phospho-beta-D-ribosyl)imidazole-4-carboxamide + L-glutamine = D-erythro-1-(imidazol-4-yl)glycerol 3-phosphate + 5-amino-1-(5-phospho-beta-D-ribosyl)imidazole-4-carboxamide + L-glutamate + H(+). It participates in amino-acid biosynthesis; L-histidine biosynthesis; L-histidine from 5-phospho-alpha-D-ribose 1-diphosphate: step 5/9. In terms of biological role, IGPS catalyzes the conversion of PRFAR and glutamine to IGP, AICAR and glutamate. The HisF subunit catalyzes the cyclization activity that produces IGP and AICAR from PRFAR using the ammonia provided by the HisH subunit. In Rhodopseudomonas palustris (strain BisA53), this protein is Imidazole glycerol phosphate synthase subunit HisF.